The primary structure comprises 384 residues: Glycerol 3-phosphate oxidase (384 aa).

Residues M1 to G15 form the signal peptide. I14 contributes to the FAD binding site. Residue C16 is the site of N-palmitoyl cysteine attachment. C16 carries S-diacylglycerol cysteine lipidation. Residues E33, T42–S43, and S47–V49 each bind FAD. 2 residues coordinate sn-glycerol 3-phosphate: S47 and H51. H51 (proton acceptor) is an active-site residue. Position 177 (V177) interacts with FAD. 2 residues coordinate sn-glycerol 3-phosphate: K258 and R320. M346–K347 contributes to the FAD binding site. S348 provides a ligand contact to sn-glycerol 3-phosphate. Residue T352 coordinates FAD.

As to quaternary structure, monomer. The cofactor is FAD.

It is found in the cytoplasm. The protein resides in the cell membrane. The catalysed reaction is sn-glycerol 3-phosphate + O2 = dihydroxyacetone phosphate + H2O2. It participates in polyol metabolism; glycerol degradation via glycerol kinase pathway; glycerone phosphate from sn-glycerol 3-phosphate (aerobic route): step 1/1. Catalyzes the oxidation of glycerol 3-phosphate to dihydroxyacetone phosphate (DHAP), with a reduction of O2 to H2O2. The formation of hydrogen peroxide by this enzyme is crucial for cytotoxic effects of M.pneumoniae on host cells. Is involved in the metabolism of glycerol and is essential for glycerol utilization; glycerol is one of the few carbon sources that can be utilized by M.pneumoniae for growth. To a lesser extent, is also able to use glyceraldehyde 3-phosphate (GAP), an intermediate in the glycolysis pathway, as a substrate (but the structure of the product has not been elucidated). Therefore, in the absence of glycerol, GAP may serve as a substrate in the GlpO reaction to supply H2O2 during mycoplasma infection. Does not show any dehydrogenase activity with NAD(+). This Mycoplasma pneumoniae (strain ATCC 29342 / M129 / Subtype 1) (Mycoplasmoides pneumoniae) protein is Glycerol 3-phosphate oxidase.